Reading from the N-terminus, the 113-residue chain is Large ribosomal subunit protein uL22 (113 aa).

Belongs to the universal ribosomal protein uL22 family. In terms of assembly, part of the 50S ribosomal subunit.

Functionally, this protein binds specifically to 23S rRNA; its binding is stimulated by other ribosomal proteins, e.g. L4, L17, and L20. It is important during the early stages of 50S assembly. It makes multiple contacts with different domains of the 23S rRNA in the assembled 50S subunit and ribosome. Its function is as follows. The globular domain of the protein is located near the polypeptide exit tunnel on the outside of the subunit, while an extended beta-hairpin is found that lines the wall of the exit tunnel in the center of the 70S ribosome. This chain is Large ribosomal subunit protein uL22, found in Bacillus cytotoxicus (strain DSM 22905 / CIP 110041 / 391-98 / NVH 391-98).